The chain runs to 215 residues: UPF0502 protein YceH (215 aa).

At lysine 80 the chain carries N6-acetyllysine.

This sequence belongs to the UPF0502 family.

This Shigella flexneri serotype 5b (strain 8401) protein is UPF0502 protein YceH.